The sequence spans 208 residues: Uracil phosphoribosyltransferase (208 aa).

5-phospho-alpha-D-ribose 1-diphosphate is bound by residues Arg-78, Arg-103, and 130-138; that span reads DPMLATGGS. Uracil-binding positions include Ile-193 and 198-200; that span reads GDA. Asp-199 provides a ligand contact to 5-phospho-alpha-D-ribose 1-diphosphate.

The protein belongs to the UPRTase family. Mg(2+) is required as a cofactor.

The enzyme catalyses UMP + diphosphate = 5-phospho-alpha-D-ribose 1-diphosphate + uracil. Its pathway is pyrimidine metabolism; UMP biosynthesis via salvage pathway; UMP from uracil: step 1/1. With respect to regulation, allosterically activated by GTP. Functionally, catalyzes the conversion of uracil and 5-phospho-alpha-D-ribose 1-diphosphate (PRPP) to UMP and diphosphate. This Escherichia fergusonii (strain ATCC 35469 / DSM 13698 / CCUG 18766 / IAM 14443 / JCM 21226 / LMG 7866 / NBRC 102419 / NCTC 12128 / CDC 0568-73) protein is Uracil phosphoribosyltransferase.